A 234-amino-acid chain; its full sequence is Phosphoglycolate phosphatase (234 aa).

Asp8 serves as the catalytic Nucleophile. Positions 8 and 10 each coordinate Mg(2+). Lys157 lines the substrate pocket. Mg(2+) is bound by residues Asp180 and Asp184.

This sequence belongs to the archaeal SPP-like hydrolase family. It depends on Mg(2+) as a cofactor.

The catalysed reaction is 2-phosphoglycolate + H2O = glycolate + phosphate. In terms of biological role, catalyzes the dephosphorylation of 2-phosphoglycolate. The polypeptide is Phosphoglycolate phosphatase (Methanoculleus marisnigri (strain ATCC 35101 / DSM 1498 / JR1)).